The primary structure comprises 294 residues: tRNA pseudouridine synthase B (294 aa).

D39 functions as the Nucleophile in the catalytic mechanism.

It belongs to the pseudouridine synthase TruB family. Type 1 subfamily.

It catalyses the reaction uridine(55) in tRNA = pseudouridine(55) in tRNA. Responsible for synthesis of pseudouridine from uracil-55 in the psi GC loop of transfer RNAs. This is tRNA pseudouridine synthase B from Streptococcus pyogenes serotype M6 (strain ATCC BAA-946 / MGAS10394).